The sequence spans 201 residues: Small ribosomal subunit protein uS4c (201 aa).

The tract at residues 16–37 is disordered; sequence GALPGLTSKRPRSGSDLRNQSR. Residues 89–152 enclose the S4 RNA-binding domain; sequence MRLDNTLFRL…RSRTLIQNHI (64 aa).

The protein belongs to the universal ribosomal protein uS4 family. In terms of assembly, part of the 30S ribosomal subunit. Contacts protein S5. The interaction surface between S4 and S5 is involved in control of translational fidelity.

The protein localises to the plastid. It is found in the chloroplast. In terms of biological role, one of the primary rRNA binding proteins, it binds directly to 16S rRNA where it nucleates assembly of the body of the 30S subunit. Its function is as follows. With S5 and S12 plays an important role in translational accuracy. In Chloranthus spicatus (Chulantree), this protein is Small ribosomal subunit protein uS4c (rps4).